A 305-amino-acid polypeptide reads, in one-letter code: Ribonuclease BN (305 aa).

Zn(2+) is bound by residues H64, H66, D68, H69, H141, D212, and H270. The active-site Proton acceptor is D68.

The protein belongs to the RNase Z family. RNase BN subfamily. As to quaternary structure, homodimer. Requires Zn(2+) as cofactor.

Functionally, zinc phosphodiesterase, which has both exoribonuclease and endoribonuclease activities. The protein is Ribonuclease BN of Escherichia coli O7:K1 (strain IAI39 / ExPEC).